The chain runs to 1343 residues: DNA-directed RNA polymerase subunit beta (1343 aa).

It belongs to the RNA polymerase beta chain family. In terms of assembly, the RNAP catalytic core consists of 2 alpha, 1 beta, 1 beta' and 1 omega subunit. When a sigma factor is associated with the core the holoenzyme is formed, which can initiate transcription.

The catalysed reaction is RNA(n) + a ribonucleoside 5'-triphosphate = RNA(n+1) + diphosphate. In terms of biological role, DNA-dependent RNA polymerase catalyzes the transcription of DNA into RNA using the four ribonucleoside triphosphates as substrates. In Shewanella sp. (strain W3-18-1), this protein is DNA-directed RNA polymerase subunit beta.